The sequence spans 734 residues: Photosystem I P700 chlorophyll a apoprotein A2 (734 aa).

8 helical membrane-spanning segments follow: residues 46–69 (IFAS…FHVA), 135–158 (LYTG…LHLQ), 175–199 (LNHH…HVAI), 273–291 (MAHH…GHMY), 330–353 (IHFQ…QHMY), 369–395 (AALY…IFFI), 417–439 (AIIS…LYVH), and 517–535 (FLVH…LILV). [4Fe-4S] cluster contacts are provided by Cys559 and Cys568. 2 helical membrane passes run 575–596 (AFYL…YWHW) and 643–665 (LSVW…MFLI). Residues His654, Met662, and Tyr670 each coordinate chlorophyll a. Trp671 is a binding site for phylloquinone. A helical transmembrane segment spans residues 707–727 (LVGLAHFSVGYIFTYAAFLIA).

It belongs to the PsaA/PsaB family. The PsaA/B heterodimer binds the P700 chlorophyll special pair and subsequent electron acceptors. PSI consists of a core antenna complex that captures photons, and an electron transfer chain that converts photonic excitation into a charge separation. The eukaryotic PSI reaction center is composed of at least 11 subunits. P700 is a chlorophyll a/chlorophyll a' dimer, A0 is one or more chlorophyll a, A1 is one or both phylloquinones and FX is a shared 4Fe-4S iron-sulfur center. is required as a cofactor.

It localises to the plastid. It is found in the chloroplast thylakoid membrane. It catalyses the reaction reduced [plastocyanin] + hnu + oxidized [2Fe-2S]-[ferredoxin] = oxidized [plastocyanin] + reduced [2Fe-2S]-[ferredoxin]. Its function is as follows. PsaA and PsaB bind P700, the primary electron donor of photosystem I (PSI), as well as the electron acceptors A0, A1 and FX. PSI is a plastocyanin-ferredoxin oxidoreductase, converting photonic excitation into a charge separation, which transfers an electron from the donor P700 chlorophyll pair to the spectroscopically characterized acceptors A0, A1, FX, FA and FB in turn. Oxidized P700 is reduced on the lumenal side of the thylakoid membrane by plastocyanin. In Draba nemorosa (Woodland whitlowgrass), this protein is Photosystem I P700 chlorophyll a apoprotein A2.